Here is a 181-residue protein sequence, read N- to C-terminus: Oligoribonuclease (181 aa).

In terms of domain architecture, Exonuclease spans Leu8 to Leu171. Tyr129 is an active-site residue.

Belongs to the oligoribonuclease family.

The protein localises to the cytoplasm. 3'-to-5' exoribonuclease specific for small oligoribonucleotides. The chain is Oligoribonuclease from Aeromonas hydrophila subsp. hydrophila (strain ATCC 7966 / DSM 30187 / BCRC 13018 / CCUG 14551 / JCM 1027 / KCTC 2358 / NCIMB 9240 / NCTC 8049).